We begin with the raw amino-acid sequence, 510 residues long: Maturase K (510 aa).

The protein belongs to the intron maturase 2 family. MatK subfamily.

It is found in the plastid. The protein resides in the chloroplast. Functionally, usually encoded in the trnK tRNA gene intron. Probably assists in splicing its own and other chloroplast group II introns. This is Maturase K from Spirodela intermedia (Intermediate duckweed).